The following is a 396-amino-acid chain: Elongation factor Tu (396 aa).

In terms of domain architecture, tr-type G spans 10–206 (KPHCNIGTIG…TVDAYIPQPE (197 aa)). The interval 19 to 26 (GHVDHGKT) is G1. GTP is bound at residue 19 to 26 (GHVDHGKT). Threonine 26 is a Mg(2+) binding site. The segment at 60-64 (GITIS) is G2. The G3 stretch occupies residues 81-84 (DCPG). Residues 81 to 85 (DCPGH) and 136 to 139 (NKVD) each bind GTP. Residues 136–139 (NKVD) are G4. The segment at 174-176 (SAL) is G5.

The protein belongs to the TRAFAC class translation factor GTPase superfamily. Classic translation factor GTPase family. EF-Tu/EF-1A subfamily. In terms of assembly, monomer.

Its subcellular location is the cytoplasm. The enzyme catalyses GTP + H2O = GDP + phosphate + H(+). In terms of biological role, GTP hydrolase that promotes the GTP-dependent binding of aminoacyl-tRNA to the A-site of ribosomes during protein biosynthesis. The polypeptide is Elongation factor Tu (Methylocella silvestris (strain DSM 15510 / CIP 108128 / LMG 27833 / NCIMB 13906 / BL2)).